The chain runs to 176 residues: Mitochondrial inner membrane protein Mpv17 (176 aa).

The next 4 helical transmembrane spans lie at 18-38, 53-73, 94-114, and 131-151; these read VQVL…QQLV, TMVS…YKVL, GGFA…LNGL, and LITN…LVPL.

This sequence belongs to the peroxisomal membrane protein PXMP2/4 family. In terms of tissue distribution, ubiquitous. Expressed in pancreas, kidney, muscle, liver, lung, placenta, brain and heart.

Its subcellular location is the mitochondrion inner membrane. Functionally, non-selective channel that modulates the membrane potential under normal conditions and oxidative stress, and is involved in mitochondrial homeostasis. Involved in mitochondrial deoxynucleoside triphosphates (dNTP) pool homeostasis and mitochondrial DNA (mtDNA) maintenance. May be involved in the regulation of reactive oxygen species metabolism and the control of oxidative phosphorylation. This Homo sapiens (Human) protein is Mitochondrial inner membrane protein Mpv17.